The primary structure comprises 711 residues: Glycine--tRNA ligase beta subunit (711 aa).

It belongs to the class-II aminoacyl-tRNA synthetase family. In terms of assembly, tetramer of two alpha and two beta subunits.

Its subcellular location is the cytoplasm. The catalysed reaction is tRNA(Gly) + glycine + ATP = glycyl-tRNA(Gly) + AMP + diphosphate. The protein is Glycine--tRNA ligase beta subunit of Polaromonas naphthalenivorans (strain CJ2).